We begin with the raw amino-acid sequence, 42 residues long: Photosystem I reaction center subunit IX (42 aa).

A helical transmembrane segment spans residues 7–27 (YLSTAPVLAAVWFTVLAGILI).

It belongs to the PsaJ family.

It localises to the plastid. It is found in the chloroplast thylakoid membrane. Its function is as follows. May help in the organization of the PsaE and PsaF subunits. The chain is Photosystem I reaction center subunit IX from Ostreococcus tauri.